Consider the following 252-residue polypeptide: MKTTTALVTGATAGFGLAICKKLIEAGYKVIGTGRRADRLAEIHSQLGNNFLPLAFDIRDEQATINALNTLPEGWQAVDLLVNNAGLALGLEPAHKADLQDWYQMIDTNIKGLVTITRLVLPNMVARNYGQIINLSSIAGTYPYAGSNVYGGTKAFVTQFSLNLRADLAGTKIRVSNVEPGLCGGTEFSNVRFHGDDERAAKVYENVQSVQPEDIANIVLWLHQQPEHVNINRIEVMPTAQSFAGMSVSKEK.

Residue 7-31 (LVTGATAGFGLAICKKLIEAGYKVI) participates in NADP(+) binding. Ser-137 serves as a coordination point for substrate. The active-site Proton acceptor is Tyr-150.

This sequence belongs to the short-chain dehydrogenases/reductases (SDR) family.

The polypeptide is Probable NADP-dependent dehydrogenase HI_1430 (Haemophilus influenzae (strain ATCC 51907 / DSM 11121 / KW20 / Rd)).